Consider the following 267-residue polypeptide: Probable 6-oxopurine nucleoside phosphorylase (267 aa).

Residues Ser-10, 50-51, and 83-84 each bind phosphate; these read RH and SA. Met-188 provides a ligand contact to substrate. Thr-189 contributes to the phosphate binding site. Substrate is bound at residue 212–214; that stretch reads NYA.

This sequence belongs to the PNP/MTAP phosphorylase family. MTAP subfamily. Homohexamer. Dimer of a homotrimer.

It carries out the reaction a purine D-ribonucleoside + phosphate = a purine nucleobase + alpha-D-ribose 1-phosphate. It catalyses the reaction guanosine + phosphate = alpha-D-ribose 1-phosphate + guanine. The catalysed reaction is inosine + phosphate = alpha-D-ribose 1-phosphate + hypoxanthine. It functions in the pathway purine metabolism; purine nucleoside salvage. Functionally, purine nucleoside phosphorylase which is highly specific for 6-oxopurine nucleosides. Cleaves guanosine or inosine to respective bases and sugar-1-phosphate molecules. Involved in purine salvage. In Thermococcus kodakarensis (strain ATCC BAA-918 / JCM 12380 / KOD1) (Pyrococcus kodakaraensis (strain KOD1)), this protein is Probable 6-oxopurine nucleoside phosphorylase.